A 262-amino-acid chain; its full sequence is Ribosomal RNA small subunit methyltransferase A (262 aa).

Residues His13, Leu15, Gly40, Glu61, Asp85, and Asn103 each contribute to the S-adenosyl-L-methionine site.

This sequence belongs to the class I-like SAM-binding methyltransferase superfamily. rRNA adenine N(6)-methyltransferase family. RsmA subfamily.

It is found in the cytoplasm. It carries out the reaction adenosine(1518)/adenosine(1519) in 16S rRNA + 4 S-adenosyl-L-methionine = N(6)-dimethyladenosine(1518)/N(6)-dimethyladenosine(1519) in 16S rRNA + 4 S-adenosyl-L-homocysteine + 4 H(+). In terms of biological role, specifically dimethylates two adjacent adenosines (A1518 and A1519) in the loop of a conserved hairpin near the 3'-end of 16S rRNA in the 30S particle. May play a critical role in biogenesis of 30S subunits. This Bordetella petrii (strain ATCC BAA-461 / DSM 12804 / CCUG 43448) protein is Ribosomal RNA small subunit methyltransferase A.